A 508-amino-acid chain; its full sequence is Photosystem II CP47 reaction center protein (508 aa).

The next 6 membrane-spanning stretches (helical) occupy residues 21 to 36 (AVHLMHTALVSGWAGS), 101 to 115 (IVLSGLLFLAAIWHW), 140 to 156 (GIHLFLSGVLCFAFGAF), 203 to 218 (IAAGILGILAGLFHLS), 237 to 252 (VLSSSIAAVFFAAFVV), and 457 to 472 (TFALLFFFGHIWHGAR).

Belongs to the PsbB/PsbC family. PsbB subfamily. PSII is composed of 1 copy each of membrane proteins PsbA, PsbB, PsbC, PsbD, PsbE, PsbF, PsbH, PsbI, PsbJ, PsbK, PsbL, PsbM, PsbT, PsbX, PsbY, PsbZ, Psb30/Ycf12, at least 3 peripheral proteins of the oxygen-evolving complex and a large number of cofactors. It forms dimeric complexes. Requires Binds multiple chlorophylls. PSII binds additional chlorophylls, carotenoids and specific lipids. as cofactor.

The protein resides in the plastid. It localises to the chloroplast thylakoid membrane. One of the components of the core complex of photosystem II (PSII). It binds chlorophyll and helps catalyze the primary light-induced photochemical processes of PSII. PSII is a light-driven water:plastoquinone oxidoreductase, using light energy to abstract electrons from H(2)O, generating O(2) and a proton gradient subsequently used for ATP formation. The polypeptide is Photosystem II CP47 reaction center protein (Marchantia polymorpha (Common liverwort)).